The chain runs to 291 residues: Phosphate import ATP-binding protein PstB (291 aa).

Residues 1 to 21 (MANKQIIDKNDDLQAHTDRND) form a disordered region. The 242-residue stretch at 45–286 (YSTKNLDLWY…PSDKQTEDYI (242 aa)) folds into the ABC transporter domain. 77-84 (GPSGCGKS) serves as a coordination point for ATP.

Belongs to the ABC transporter superfamily. Phosphate importer (TC 3.A.1.7) family. As to quaternary structure, the complex is composed of two ATP-binding proteins (PstB), two transmembrane proteins (PstC and PstA) and a solute-binding protein (PstS).

It is found in the cell membrane. It catalyses the reaction phosphate(out) + ATP + H2O = ADP + 2 phosphate(in) + H(+). Functionally, part of the ABC transporter complex PstSACB involved in phosphate import. Responsible for energy coupling to the transport system. The sequence is that of Phosphate import ATP-binding protein PstB from Staphylococcus saprophyticus subsp. saprophyticus (strain ATCC 15305 / DSM 20229 / NCIMB 8711 / NCTC 7292 / S-41).